The following is a 665-amino-acid chain: Methionine--tRNA ligase (665 aa).

A 'HIGH' region motif is present at residues 12–22 (YYPSGKLHIGS). The short motif at 308-312 (KMSKS) is the 'KMSKS' region element. Residue Lys-311 participates in ATP binding. A tRNA-binding domain is found at 562–665 (TFDAVEIRVA…SSVPNGSIIG (104 aa)).

Belongs to the class-I aminoacyl-tRNA synthetase family. MetG type 2B subfamily. As to quaternary structure, homodimer.

It is found in the cytoplasm. The catalysed reaction is tRNA(Met) + L-methionine + ATP = L-methionyl-tRNA(Met) + AMP + diphosphate. Its function is as follows. Is required not only for elongation of protein synthesis but also for the initiation of all mRNA translation through initiator tRNA(fMet) aminoacylation. The chain is Methionine--tRNA ligase (metG) from Streptococcus pyogenes serotype M18 (strain MGAS8232).